We begin with the raw amino-acid sequence, 327 residues long: 4-diphosphocytidyl-2-C-methyl-D-erythritol kinase (327 aa).

Lys-14 is an active-site residue. An ATP-binding site is contributed by 97-107; it reads PDGAGLGGGSA. Asp-140 is a catalytic residue.

It belongs to the GHMP kinase family. IspE subfamily.

The enzyme catalyses 4-CDP-2-C-methyl-D-erythritol + ATP = 4-CDP-2-C-methyl-D-erythritol 2-phosphate + ADP + H(+). Its pathway is isoprenoid biosynthesis; isopentenyl diphosphate biosynthesis via DXP pathway; isopentenyl diphosphate from 1-deoxy-D-xylulose 5-phosphate: step 3/6. In terms of biological role, catalyzes the phosphorylation of the position 2 hydroxy group of 4-diphosphocytidyl-2C-methyl-D-erythritol. In Oleidesulfovibrio alaskensis (strain ATCC BAA-1058 / DSM 17464 / G20) (Desulfovibrio alaskensis), this protein is 4-diphosphocytidyl-2-C-methyl-D-erythritol kinase.